A 217-amino-acid chain; its full sequence is NADPH-dependent 3-demethoxyubiquinone 3-hydroxylase, mitochondrial (217 aa).

The N-terminal 23 residues, 1–23, are a transit peptide targeting the mitochondrion; sequence MSAAGAIAAASVGRLRTGVRRPF. Repeat copies occupy residues 48–129 and 130–217. The interval 48-217 is 2 X approximate tandem repeats; that stretch reads AVDRIIRVDH…SAAIYLSERF (170 aa). Arg51 is an NADH binding site. Residues Glu60, Glu90, His93, Glu142, Glu178, and His181 each coordinate Fe cation. NADH is bound by residues Tyr212 and Arg216.

Belongs to the COQ7 family. Component of a multi-subunit COQ enzyme complex. Interacts with COQ8B and COQ6. Interacts with COQ9. Fe cation is required as a cofactor. In terms of tissue distribution, highly expressed in tissues with high energy demand such as heart, muscle, liver, and kidney.

Its subcellular location is the mitochondrion inner membrane. The enzyme catalyses a 5-methoxy-2-methyl-3-(all-trans-polyprenyl)benzoquinone + NADH + O2 = a 3-demethylubiquinone + NAD(+) + H2O. It functions in the pathway cofactor biosynthesis; ubiquinone biosynthesis. Catalyzes the hydroxylation of the 5-methoxy-2-methyl-3-(all-trans-polyprenyl)benzoquinone at the C6 position and participates in the biosynthesis of ubiquinone. Catalyzes the reaction through a substrate-mediated reduction pathway, whereby NADH shuttles electrons to 5-methoxy-2-methyl-3-(all-trans-decaprenyl)benzoquinone, which then transfers the electrons to the two Fe(3+) centers. The binding of 5-methoxy-2-methyl-3-(all-trans-polyprenyl)benzoquinone (DMQn) mediates reduction of the diiron center by nicotinamide adenine dinucleotide (NADH) and initiates oxygen activation for subsequent DMQ hydroxylation. The physiological substrates are 5-methoxy-2-methyl-3-(all-trans-nonaprenyl)benzoquinone (DMQ(9)) and 5-methoxy-2-methyl-3-(all-trans-decaprenyl)benzoquinone (DMQ(10)), however in vitro the enzyme does not have any specificity concerning the length of the polyprenyl tail, and accepts tails of various lengths with similar efficiency. Also has a structural role in the COQ enzyme complex, stabilizing other COQ polypeptides. Involved in lifespan determination in a ubiquinone-independent manner. Plays a role in modulating mitochondrial stress responses, acting in the nucleus, perhaps via regulating gene expression, independent of its characterized mitochondrial function in ubiquinone biosynthesis. This is NADPH-dependent 3-demethoxyubiquinone 3-hydroxylase, mitochondrial from Mus musculus (Mouse).